Here is a 208-residue protein sequence, read N- to C-terminus: Granulocyte colony-stimulating factor (208 aa).

Residues Met1 to Ala30 form the signal peptide. 2 disulfides stabilise this stretch: Cys72–Cys78 and Cys100–Cys110. Thr169 carries an O-linked (GalNAc...) threonine glycan.

The protein belongs to the IL-6 superfamily. In terms of assembly, monomer. Post-translationally, O-glycosylated.

It localises to the secreted. Functionally, granulocyte/macrophage colony-stimulating factors are cytokines that act in hematopoiesis by controlling the production, differentiation, and function of 2 related white cell populations of the blood, the granulocytes and the monocytes-macrophages. This CSF induces granulocytes. The sequence is that of Granulocyte colony-stimulating factor (Csf3) from Mus musculus (Mouse).